We begin with the raw amino-acid sequence, 245 residues long: AP-1-like transcription factor YAP7 (245 aa).

The disordered stretch occupies residues 1–144 (MRQRRSVVAV…NRDAQRAYRE (144 aa)). Polar residues predominate over residues 74–94 (SANNDGSSKIKKVQTSNQKDQ). Composition is skewed to basic and acidic residues over residues 95–114 (MTTK…KSDD) and 135–144 (NRDAQRAYRE). One can recognise a bZIP domain in the interval 125-188 (VDSVEKRRRQ…SDTKENLQKS (64 aa)). The segment at 130–149 (KRRRQNRDAQRAYRERRTTR) is basic motif. Positions 153–181 (LEEKVEMLHNLVDDWQRKYKLLESEFSDT) are leucine-zipper.

Belongs to the bZIP family. YAP subfamily. Homodimer.

The protein localises to the nucleus. In terms of biological role, probable transcription activator linked to cell cycle that induces transcription activation of genes in the environmental stress response and metabolism control pathways, like the closely related YAP5. The polypeptide is AP-1-like transcription factor YAP7 (YAP7) (Saccharomyces cerevisiae (strain ATCC 204508 / S288c) (Baker's yeast)).